The chain runs to 215 residues: ATP-dependent Clp protease proteolytic subunit (215 aa).

The active-site Nucleophile is Ser115. His140 is an active-site residue.

The protein belongs to the peptidase S14 family. As to quaternary structure, fourteen ClpP subunits assemble into 2 heptameric rings which stack back to back to give a disk-like structure with a central cavity, resembling the structure of eukaryotic proteasomes.

It localises to the cytoplasm. It catalyses the reaction Hydrolysis of proteins to small peptides in the presence of ATP and magnesium. alpha-casein is the usual test substrate. In the absence of ATP, only oligopeptides shorter than five residues are hydrolyzed (such as succinyl-Leu-Tyr-|-NHMec, and Leu-Tyr-Leu-|-Tyr-Trp, in which cleavage of the -Tyr-|-Leu- and -Tyr-|-Trp bonds also occurs).. Its function is as follows. Cleaves peptides in various proteins in a process that requires ATP hydrolysis. Has a chymotrypsin-like activity. Plays a major role in the degradation of misfolded proteins. In Anaplasma marginale (strain Florida), this protein is ATP-dependent Clp protease proteolytic subunit.